The sequence spans 901 residues: Schlafen family member 11 (901 aa).

Mg(2+) is bound by residues Glu-209 and Glu-214. Residue Lys-216 is part of the active site. Residues His-285, Cys-287, Cys-321, and Cys-322 each coordinate Zn(2+). 599–606 (GLPGSGKT) lines the ATP pocket.

Belongs to the Schlafen family. Subgroup III subfamily. Homodimer. Interacts with MCM3. Interacts with DHX9. Interacts with RPA1. It depends on Mg(2+) as a cofactor. As to expression, exhibits a wider expression range in ovarian and colon adenocarcinoma than in their corresponding healthy tissues.

It is found in the nucleus. Its subcellular location is the chromosome. Inhibitor of DNA replication that promotes cell death in response to DNA damage. Acts as a guardian of the genome by killing cells with defective replication. Persistently blocks stressed replication forks by opening chromatin across replication initiation sites at stressed replication forks, possibly leading to unwind DNA ahead of the MCM helicase and block fork progression, ultimately leading to cell death. Upon DNA damage, inhibits translation of ATR or ATM based on distinct codon usage without disrupting early DNA damage response signaling. Antiviral restriction factor with manganese-dependent type II tRNA endoribonuclease. A single tRNA molecule is bound and cleaved by the SLFN11 dimer. Specifically abrogates the production of retroviruses such as human immunodeficiency virus 1 (HIV-1) by acting as a specific inhibitor of the synthesis of retroviruses encoded proteins in a codon-usage-dependent manner. Impairs the replication of human cytomegalovirus (HCMV) and some Flaviviruses. Exploits the unique viral codon bias towards A/T nucleotides. Also acts as an interferon (IFN)-induced antiviral protein which acts as an inhibitor of retrovirus protein synthesis. The protein is Schlafen family member 11 of Homo sapiens (Human).